Here is a 475-residue protein sequence, read N- to C-terminus: Probable UDP-N-acetylglucosamine pyrophosphorylase (475 aa).

The Substrate binding motif lies at 103–106; it reads LAGG. Residues 103–106, Lys117, Gln194, and Gly220 contribute to the UTP site; that span reads LAGG. Asn221 serves as a coordination point for substrate. Asp251 provides a ligand contact to UTP. The Substrate binding motif lies at 301–302; that stretch reads EY. Lys378 provides a ligand contact to UTP. Ser405 carries the phosphoserine modification. Lys410 is a substrate binding site.

The protein belongs to the UDPGP type 1 family.

It localises to the cytoplasm. Its subcellular location is the nucleus. It carries out the reaction N-acetyl-alpha-D-glucosamine 1-phosphate + UTP + H(+) = UDP-N-acetyl-alpha-D-glucosamine + diphosphate. It functions in the pathway nucleotide-sugar biosynthesis; UDP-N-acetyl-alpha-D-glucosamine biosynthesis; UDP-N-acetyl-alpha-D-glucosamine from N-acetyl-alpha-D-glucosamine 1-phosphate: step 1/1. The chain is Probable UDP-N-acetylglucosamine pyrophosphorylase (uap1) from Schizosaccharomyces pombe (strain 972 / ATCC 24843) (Fission yeast).